A 161-amino-acid chain; its full sequence is S-protein homolog 2 (161 aa).

Positions 1 to 24 are cleaved as a signal peptide; it reads MDIPKQYLSLFILIIFITTKLSQA. Residues Asn-75, Asn-106, and Asn-157 are each glycosylated (N-linked (GlcNAc...) asparagine).

The protein belongs to the plant self-incompatibility (S1) protein family.

It localises to the secreted. The chain is S-protein homolog 2 from Arabidopsis thaliana (Mouse-ear cress).